We begin with the raw amino-acid sequence, 466 residues long: MSQGTIVQCIGAVVDIQFPREAMPKVYDALKLENAAGSFAEEGLTFEVQQQLGDGVVRTIAMGSSDGLRRGMKVASTGKGISIPVGHGTLGRIMDVLGRPIDEAGPIEADELRPIHAKAPKFDELSPSVDLLETGIKVIDLVCPFAKGGKVGLFGGAGVGKTVNMMELINNIAKQHSGLSVFAGVGERTREGNDFYHEMKDSNVLDKVAMVFGQMNEPPGNRLRVALTGLTMAERFRDEGRDILFFVDNIYRYTLAGTEVSALLGRMPSAVGYQPTLAEEMGRLQERITSTKVGSITSIQAVYVPADDLTDPSPATTFLHLDSTVVLSRDIAALGIYPAVDPLDSTSRQLDPLVVGEEHYNVARQVQVTLQRYKELRDIIAILGMDELSPEDKLAVSRARKIQRFLSQPFHVAEVFTGSPGKYVPLKDTINGFKMIVNGECDHLPEQAFYMVGGIEEAMEKAKKLQ.

155-162 serves as a coordination point for ATP; that stretch reads GGAGVGKT.

Belongs to the ATPase alpha/beta chains family. F-type ATPases have 2 components, CF(1) - the catalytic core - and CF(0) - the membrane proton channel. CF(1) has five subunits: alpha(3), beta(3), gamma(1), delta(1), epsilon(1). CF(0) has three main subunits: a(1), b(2) and c(9-12). The alpha and beta chains form an alternating ring which encloses part of the gamma chain. CF(1) is attached to CF(0) by a central stalk formed by the gamma and epsilon chains, while a peripheral stalk is formed by the delta and b chains.

It localises to the cell inner membrane. The catalysed reaction is ATP + H2O + 4 H(+)(in) = ADP + phosphate + 5 H(+)(out). Its function is as follows. Produces ATP from ADP in the presence of a proton gradient across the membrane. The catalytic sites are hosted primarily by the beta subunits. The chain is ATP synthase subunit beta from Aromatoleum aromaticum (strain DSM 19018 / LMG 30748 / EbN1) (Azoarcus sp. (strain EbN1)).